A 145-amino-acid chain; its full sequence is Bacilliredoxin SSP1241 (145 aa).

This sequence belongs to the bacilliredoxin family.

The sequence is that of Bacilliredoxin SSP1241 from Staphylococcus saprophyticus subsp. saprophyticus (strain ATCC 15305 / DSM 20229 / NCIMB 8711 / NCTC 7292 / S-41).